The sequence spans 536 residues: Putative cysteine ligase BshC (536 aa).

This sequence belongs to the BshC family.

Involved in bacillithiol (BSH) biosynthesis. May catalyze the last step of the pathway, the addition of cysteine to glucosamine malate (GlcN-Mal) to generate BSH. This is Putative cysteine ligase BshC from Anoxybacillus flavithermus (strain DSM 21510 / WK1).